The chain runs to 727 residues: Fatty acid oxidation complex subunit alpha (727 aa).

Residues 1 to 200 form an enoyl-CoA hydratase region; it reads MNDQQPFSAI…RQGLVDEAVP (200 aa). Residues 316-727 are 3-hydroxyacyl-CoA dehydrogenase; sequence KPIHYVGILG…PPTDEDDSAS (412 aa).

It in the N-terminal section; belongs to the enoyl-CoA hydratase/isomerase family. The protein in the central section; belongs to the 3-hydroxyacyl-CoA dehydrogenase family. In terms of assembly, heterotetramer of two alpha chains (FadJ) and two beta chains (FadI).

The protein localises to the cytoplasm. The catalysed reaction is a (3S)-3-hydroxyacyl-CoA = a (2E)-enoyl-CoA + H2O. It carries out the reaction a 4-saturated-(3S)-3-hydroxyacyl-CoA = a (3E)-enoyl-CoA + H2O. It catalyses the reaction a (3S)-3-hydroxyacyl-CoA + NAD(+) = a 3-oxoacyl-CoA + NADH + H(+). The enzyme catalyses (3S)-3-hydroxybutanoyl-CoA = (3R)-3-hydroxybutanoyl-CoA. Its pathway is lipid metabolism; fatty acid beta-oxidation. In terms of biological role, catalyzes the formation of a hydroxyacyl-CoA by addition of water on enoyl-CoA. Also exhibits 3-hydroxyacyl-CoA epimerase and 3-hydroxyacyl-CoA dehydrogenase activities. The sequence is that of Fatty acid oxidation complex subunit alpha from Pectobacterium carotovorum subsp. carotovorum (strain PC1).